The chain runs to 548 residues: Inosine-5'-monophosphate dehydrogenase (548 aa).

2 CBS domains span residues 121 to 201 (FILD…EDPV) and 205 to 261 (MSTE…PLAS). NAD(+)-binding positions include 298–300 (DSS) and 348–350 (GMG). K(+) contacts are provided by Gly350 and Gly352. Ser353 contacts IMP. Cys355 provides a ligand contact to K(+). Catalysis depends on Cys355, which acts as the Thioimidate intermediate. Residues 388 to 390 (DGG) and 411 to 412 (GS) each bind IMP. The active-site Proton acceptor is Arg461. Gln473 is a binding site for IMP. The interval 527–548 (ASAQTEGNVHGLHSHEKKLYSS) is disordered. Residue Ser528 participates in K(+) binding. Basic and acidic residues predominate over residues 539 to 548 (HSHEKKLYSS).

This sequence belongs to the IMPDH/GMPR family. In terms of assembly, homotetramer. It depends on K(+) as a cofactor.

Its subcellular location is the cytoplasm. It carries out the reaction IMP + NAD(+) + H2O = XMP + NADH + H(+). It participates in purine metabolism; XMP biosynthesis via de novo pathway; XMP from IMP: step 1/1. With respect to regulation, mycophenolic acid (MPA) is a non-competitive inhibitor that prevents formation of the closed enzyme conformation by binding to the same site as the amobile flap. In contrast, mizoribine monophosphate (MZP) is a competitive inhibitor that induces the closed conformation. MPA is a potent inhibitor of mammalian IMPDHs but a poor inhibitor of the bacterial enzymes. MZP is a more potent inhibitor of bacterial IMPDH. In terms of biological role, catalyzes the conversion of inosine 5'-phosphate (IMP) to xanthosine 5'-phosphate (XMP), the first committed and rate-limiting step in the de novo synthesis of guanine nucleotides, and therefore plays an important role in the regulation of cell growth. Part of the gene cluster that mediates the biosynthesis of mycophenolic acid (MPA), the first isolated antibiotic natural product in the world. Does not play a role in the biosynthesis of MPA, but is involved in self resistance to MPA, since MPA acts as an inhibitor of IMP dehydrogenases. The protein is Inosine-5'-monophosphate dehydrogenase of Penicillium brevicompactum.